A 345-amino-acid chain; its full sequence is MIKVGIVGGTGYTGVELLRILATHPEAEVICITSRSEAGMPVADMYPNLRGHYELEFSEPDASVLASCDLVFFATPHGVAMRMVPELMASGVRVVDLSADFRLKDLDTWANWYGMPHESADWAEKAVYGLPEVARDAIRDAQLVANPGCYPTAVQLGFLPLLEQGLVNPARLIADAKSGASGAGRQGKIGMLHGEIGESFKAYGASGHRHLPEIRQGLTAAAGKGVGVTFVPHLIPMIRGIEATLYAELDNPQDFDRLQALYEARYKDEPFVDVMPFGSHPETRSVRGANHCRMALHRQEDSNIVIVSSVIDNLVKGAAGQAVQNMNIMFSLDETMGLNAPALLP.

The active site involves Cys-149.

It belongs to the NAGSA dehydrogenase family. Type 1 subfamily.

The protein localises to the cytoplasm. It catalyses the reaction N-acetyl-L-glutamate 5-semialdehyde + phosphate + NADP(+) = N-acetyl-L-glutamyl 5-phosphate + NADPH + H(+). It functions in the pathway amino-acid biosynthesis; L-arginine biosynthesis; N(2)-acetyl-L-ornithine from L-glutamate: step 3/4. In terms of biological role, catalyzes the NADPH-dependent reduction of N-acetyl-5-glutamyl phosphate to yield N-acetyl-L-glutamate 5-semialdehyde. The protein is N-acetyl-gamma-glutamyl-phosphate reductase of Marinobacter nauticus (strain ATCC 700491 / DSM 11845 / VT8) (Marinobacter aquaeolei).